The sequence spans 520 residues: MATLTNGQVDAAVHGGAASTNGLVNGISHTHSPASCATIPMKDHDAIKLFIGQIPRNLDEKDLRPLFEEFGKIYELTVLKDRFTGMHKGCAFLTYCARESALKAQTALHEQKTLPGMNRPIQVKPADSESRGEDRKLFVGMLNKQQCEDDVRRLFESFGSIEECTILRGPDGNSKGCAFVKYSTHAEAQAAISALHGSQTMPGASSSLVVKFADTDKERTIRRMQQMAGQMGIFNPMALQFGAYGAYAQVQQQAALMASVGQGGYLSPMAAFAAAQMQHMATINGLPGAPMTPTSGGSTPPGITAPTVTSIPSPISVNGFTGLPPPQANGQAPAEAMFTNGIHPYPVLQEVVFREDSEKGGLGVAQRSCFGVQGSCFLSSLSEAQSPTAADPLQQAYAGVQQYAAFPAAYGQISQAFPQPPPIIPQQQREGPEGCNLFIYHLPQEFGDGELMQMFLPFGNVISSKVFVDRATNQSKCFGFVSFDNPGSAQAAIQSMNGFQIGMKRLKVQLKRPKDANRPY.

RRM domains follow at residues 47–128, 135–215, and 435–513; these read IKLF…PADS, RKLF…FADT, and CNLF…LKRP.

It belongs to the CELF/BRUNOL family.

It localises to the nucleus. Its subcellular location is the cytoplasm. Functionally, RNA-binding protein that may be implicated in the regulation of pre-mRNA alternative splicing. In Danio rerio (Zebrafish), this protein is CUGBP Elav-like family member 4 (celf4).